The primary structure comprises 490 residues: Betaine aldehyde dehydrogenase (490 aa).

D93 is a binding site for K(+). Position 150–152 (150–152 (GAW)) interacts with NAD(+). K162 functions as the Charge relay system in the catalytic mechanism. Residue 176–179 (KPSE) participates in NAD(+) binding. A K(+)-binding site is contributed by V180. Residue 230–233 (GVKT) participates in NAD(+) binding. L246 contacts K(+). The active-site Proton acceptor is the E252. NAD(+) is bound by residues G254, C286, and E387. Catalysis depends on C286, which acts as the Nucleophile. C286 carries the cysteine sulfenic acid (-SOH) modification. K(+)-binding residues include K457 and G460. Residue E464 is the Charge relay system of the active site.

It belongs to the aldehyde dehydrogenase family. As to quaternary structure, dimer of dimers. K(+) serves as cofactor.

The catalysed reaction is betaine aldehyde + NAD(+) + H2O = glycine betaine + NADH + 2 H(+). It participates in amine and polyamine biosynthesis; betaine biosynthesis via choline pathway; betaine from betaine aldehyde: step 1/1. Its function is as follows. Involved in the biosynthesis of the osmoprotectant glycine betaine. Catalyzes the irreversible oxidation of betaine aldehyde to the corresponding acid. In Serratia proteamaculans (strain 568), this protein is Betaine aldehyde dehydrogenase.